The sequence spans 370 residues: Spermidine/putrescine import ATP-binding protein PotA (370 aa).

Residues 6-236 (IELHQVTKRY…PINHFVADFI (231 aa)) enclose the ABC transporter domain. 38–45 (GPSGCGKT) lines the ATP pocket.

This sequence belongs to the ABC transporter superfamily. Spermidine/putrescine importer (TC 3.A.1.11.1) family. The complex is composed of two ATP-binding proteins (PotA), two transmembrane proteins (PotB and PotC) and a solute-binding protein (PotD).

It localises to the cell membrane. The enzyme catalyses ATP + H2O + polyamine-[polyamine-binding protein]Side 1 = ADP + phosphate + polyamineSide 2 + [polyamine-binding protein]Side 1.. Its function is as follows. Part of the ABC transporter complex PotABCD involved in spermidine/putrescine import. Responsible for energy coupling to the transport system. This chain is Spermidine/putrescine import ATP-binding protein PotA, found in Levilactobacillus brevis (strain ATCC 367 / BCRC 12310 / CIP 105137 / JCM 1170 / LMG 11437 / NCIMB 947 / NCTC 947) (Lactobacillus brevis).